We begin with the raw amino-acid sequence, 696 residues long: UvrABC system protein B (696 aa).

The region spanning glutamate 46–arginine 433 is the Helicase ATP-binding domain. Position 59 to 66 (glycine 59 to threonine 66) interacts with ATP. The Beta-hairpin signature appears at tyrosine 112 to isoleucine 135. The 167-residue stretch at glutamine 450–isoleucine 616 folds into the Helicase C-terminal domain. The UVR domain occupies alanine 647 to arginine 682.

It belongs to the UvrB family. As to quaternary structure, forms a heterotetramer with UvrA during the search for lesions. Interacts with UvrC in an incision complex.

The protein localises to the cytoplasm. In terms of biological role, the UvrABC repair system catalyzes the recognition and processing of DNA lesions. A damage recognition complex composed of 2 UvrA and 2 UvrB subunits scans DNA for abnormalities. Upon binding of the UvrA(2)B(2) complex to a putative damaged site, the DNA wraps around one UvrB monomer. DNA wrap is dependent on ATP binding by UvrB and probably causes local melting of the DNA helix, facilitating insertion of UvrB beta-hairpin between the DNA strands. Then UvrB probes one DNA strand for the presence of a lesion. If a lesion is found the UvrA subunits dissociate and the UvrB-DNA preincision complex is formed. This complex is subsequently bound by UvrC and the second UvrB is released. If no lesion is found, the DNA wraps around the other UvrB subunit that will check the other stand for damage. This Burkholderia mallei (strain ATCC 23344) protein is UvrABC system protein B.